The following is an 82-amino-acid chain: Cytotoxin 6 (82 aa).

Positions 1-21 (MKTLLLTLVVVTIVCLDLGYT) are cleaved as a signal peptide. Intrachain disulfides connect C24–C42, C35–C59, C63–C74, and C75–C80.

This sequence belongs to the three-finger toxin family. Short-chain subfamily. Type IA cytotoxin sub-subfamily. In terms of assembly, monomer in solution; Homodimer and oligomer in the presence of negatively charged lipids forming a pore with a size ranging between 20 and 30 Angstroms. In terms of tissue distribution, expressed by the venom gland.

Its subcellular location is the secreted. The protein localises to the target cell membrane. In terms of biological role, shows cytolytic activity on many different cells by forming pore in lipid membranes. In vivo, increases heart rate or kills the animal by cardiac arrest. In addition, it binds to heparin with high affinity, interacts with Kv channel-interacting protein 1 (KCNIP1) in a calcium-independent manner, and binds to integrin alpha-V/beta-3 (ITGAV/ITGB3) with moderate affinity. This Naja atra (Chinese cobra) protein is Cytotoxin 6.